Consider the following 374-residue polypeptide: Quinolinate synthase (374 aa).

Residues histidine 53 and serine 70 each contribute to the iminosuccinate site. Cysteine 116 provides a ligand contact to [4Fe-4S] cluster. Iminosuccinate contacts are provided by residues 148–150 (YMN) and serine 169. Cysteine 236 is a [4Fe-4S] cluster binding site. Residues 262–264 (HPE) and threonine 279 contribute to the iminosuccinate site. Residue cysteine 327 coordinates [4Fe-4S] cluster.

Belongs to the quinolinate synthase family. Type 3 subfamily. [4Fe-4S] cluster serves as cofactor.

Its subcellular location is the cytoplasm. The enzyme catalyses iminosuccinate + dihydroxyacetone phosphate = quinolinate + phosphate + 2 H2O + H(+). Its pathway is cofactor biosynthesis; NAD(+) biosynthesis; quinolinate from iminoaspartate: step 1/1. In terms of biological role, catalyzes the condensation of iminoaspartate with dihydroxyacetone phosphate to form quinolinate. This is Quinolinate synthase from Haloarcula marismortui (strain ATCC 43049 / DSM 3752 / JCM 8966 / VKM B-1809) (Halobacterium marismortui).